The chain runs to 66 residues: ARDGYIADDKNCAYFCGRNAYCDEECKKKGAESGYCQWAGQYGNACWCYKLPDKVPIKVSGKCNGR.

The 63-residue stretch at 2-64 (RDGYIADDKN…VPIKVSGKCN (63 aa)) folds into the LCN-type CS-alpha/beta domain. 4 disulfide bridges follow: cysteine 12–cysteine 63, cysteine 16–cysteine 36, cysteine 22–cysteine 46, and cysteine 26–cysteine 48. Asparagine 64 is subject to Asparagine amide.

This sequence belongs to the long (4 C-C) scorpion toxin superfamily. Sodium channel inhibitor family. Alpha subfamily. Expressed by the venom gland.

It is found in the secreted. Alpha toxins bind voltage-independently at site-3 of sodium channels (Nav) and inhibit the inactivation of the activated channels, thereby blocking neuronal transmission. In Mesobuthus eupeus (Lesser Asian scorpion), this protein is Sodium channel neurotoxin MeuNaTxalpha-7.